We begin with the raw amino-acid sequence, 257 residues long: Imidazole glycerol phosphate synthase subunit HisF (257 aa).

Residues Asp12 and Asp131 contribute to the active site.

It belongs to the HisA/HisF family. In terms of assembly, heterodimer of HisH and HisF.

It localises to the cytoplasm. It catalyses the reaction 5-[(5-phospho-1-deoxy-D-ribulos-1-ylimino)methylamino]-1-(5-phospho-beta-D-ribosyl)imidazole-4-carboxamide + L-glutamine = D-erythro-1-(imidazol-4-yl)glycerol 3-phosphate + 5-amino-1-(5-phospho-beta-D-ribosyl)imidazole-4-carboxamide + L-glutamate + H(+). The protein operates within amino-acid biosynthesis; L-histidine biosynthesis; L-histidine from 5-phospho-alpha-D-ribose 1-diphosphate: step 5/9. Its function is as follows. IGPS catalyzes the conversion of PRFAR and glutamine to IGP, AICAR and glutamate. The HisF subunit catalyzes the cyclization activity that produces IGP and AICAR from PRFAR using the ammonia provided by the HisH subunit. This chain is Imidazole glycerol phosphate synthase subunit HisF, found in Rhodococcus jostii (strain RHA1).